Here is a 133-residue protein sequence, read N- to C-terminus: Large ribosomal subunit protein bL17 (133 aa).

Belongs to the bacterial ribosomal protein bL17 family. As to quaternary structure, part of the 50S ribosomal subunit. Contacts protein L32.

The sequence is that of Large ribosomal subunit protein bL17 from Polaromonas naphthalenivorans (strain CJ2).